A 313-amino-acid chain; its full sequence is Olfactory receptor 10P1 (313 aa).

Topologically, residues 1 to 25 (MAGENHTTLPEFLLLGFSDLKALQG) are extracellular. The N-linked (GlcNAc...) asparagine glycan is linked to Asn5. Residues 26–46 (PLFWVVLLVYLVTLLGNSLII) form a helical membrane-spanning segment. At 47–54 (LLTQVSPA) the chain is on the cytoplasmic side. A helical membrane pass occupies residues 55-75 (LHSPMYFFLRQLSVVELFYTT). The Extracellular portion of the chain corresponds to 76-100 (DIVPRTLANLGSPHPQAISFQGCAA). A helical transmembrane segment spans residues 101–121 (QMYVFIVLGISECCLLTAMAY). At 122 to 140 (DRYVAICQPLRYSTLLSPR) the chain is on the cytoplasmic side. The chain crosses the membrane as a helical span at residues 141–161 (ACMAMVGTSWLTGIITATTHA). The Extracellular segment spans residues 162-198 (SLIFSLPFRSHPIIPHFLCDILPVLRLASAGKHRSEI). The helical transmembrane segment at 199–218 (SVMTATIVFIMIPFSLIVTS) threads the bilayer. Over 219 to 238 (YIRILGAILAMASTQSRRKV) the chain is Cytoplasmic. The helical transmembrane segment at 239–259 (FSTCSSHLLVVSLFFGTASIT) threads the bilayer. The Extracellular segment spans residues 260–272 (YIRPQAGSSVTTD). Residues 273–293 (RVLSLFYTVITPMLNPIIYTL) form a helical membrane-spanning segment. Topologically, residues 294 to 313 (RNKDVRRALRHLVKRQRPSP) are cytoplasmic.

This sequence belongs to the G-protein coupled receptor 1 family.

The protein localises to the cell membrane. In terms of biological role, odorant receptor. This chain is Olfactory receptor 10P1 (OR10P1), found in Homo sapiens (Human).